A 199-amino-acid chain; its full sequence is 7-methyl-GTP pyrophosphatase (199 aa).

Catalysis depends on Asp-76, which acts as the Proton acceptor.

This sequence belongs to the Maf family. YceF subfamily. A divalent metal cation serves as cofactor.

Its subcellular location is the cytoplasm. The catalysed reaction is N(7)-methyl-GTP + H2O = N(7)-methyl-GMP + diphosphate + H(+). Functionally, nucleoside triphosphate pyrophosphatase that hydrolyzes 7-methyl-GTP (m(7)GTP). May have a dual role in cell division arrest and in preventing the incorporation of modified nucleotides into cellular nucleic acids. The chain is 7-methyl-GTP pyrophosphatase from Hahella chejuensis (strain KCTC 2396).